The chain runs to 839 residues: Lon protease (839 aa).

Residues leucine 31–isoleucine 224 form the Lon N-terminal domain. Glycine 377–threonine 384 contributes to the ATP binding site. Residues alanine 613 to glutamate 790 enclose the Lon proteolytic domain. Active-site residues include serine 696 and lysine 739. The interval isoleucine 807 to lysine 839 is disordered. A compositionally biased stretch (low complexity) spans lysine 823 to lysine 832.

It belongs to the peptidase S16 family. Homohexamer. Organized in a ring with a central cavity.

The protein resides in the cytoplasm. It catalyses the reaction Hydrolysis of proteins in presence of ATP.. ATP-dependent serine protease that mediates the selective degradation of mutant and abnormal proteins as well as certain short-lived regulatory proteins. Required for cellular homeostasis and for survival from DNA damage and developmental changes induced by stress. Degrades polypeptides processively to yield small peptide fragments that are 5 to 10 amino acids long. Binds to DNA in a double-stranded, site-specific manner. The polypeptide is Lon protease (Leptospira interrogans serogroup Icterohaemorrhagiae serovar copenhageni (strain Fiocruz L1-130)).